Consider the following 133-residue polypeptide: MRTVSMAALVVIAAALAWTSSAEPAPAPAPGEEACGKVVQDIMPCLHFVKGEEKEPSKECCSGTKKLSEEVKTTEQKREACKCIVRATKGISGIKNELVAEVPKKCDIKTTLPPITADFDCSKIQSTIFRGYY.

The signal sequence occupies residues methionine 1 to glycine 31. 4 disulfides stabilise this stretch: cysteine 35/cysteine 83, cysteine 45/cysteine 60, cysteine 61/cysteine 106, and cysteine 81/cysteine 121.

Belongs to the plant LTP family.

Functionally, plant non-specific lipid-transfer proteins transfer phospholipids as well as galactolipids across membranes. May play a role in wax or cutin deposition in the cell walls of expanding epidermal cells and certain secretory tissues. The chain is Probable non-specific lipid-transfer protein 2 from Parietaria judaica (Pellitory-of-the-wall).